A 143-amino-acid chain; its full sequence is Ribosome maturation factor RimP (143 aa).

The protein belongs to the RimP family.

Its subcellular location is the cytoplasm. Its function is as follows. Required for maturation of 30S ribosomal subunits. In Borrelia recurrentis (strain A1), this protein is Ribosome maturation factor RimP.